The primary structure comprises 131 residues: Large-conductance mechanosensitive channel (131 aa).

Helical transmembrane passes span 14–34 and 71–91; these read VMDM…VTSL and GNFI…FLLV.

The protein belongs to the MscL family. In terms of assembly, homopentamer.

It localises to the cell inner membrane. Functionally, channel that opens in response to stretch forces in the membrane lipid bilayer. May participate in the regulation of osmotic pressure changes within the cell. This is Large-conductance mechanosensitive channel from Dinoroseobacter shibae (strain DSM 16493 / NCIMB 14021 / DFL 12).